Reading from the N-terminus, the 401-residue chain is MSLGNARPLVSVYTEKNEPAKDKNICLPAVFKAPIRPDVVNEVHQLLRRNNRQAYAVSELAGHQTSAESWGTGRAVARIPRVRGGGTHRSGQGAFGNMCRGGRMFAPTKTFRRWHRKVNVNQRRYALVSAIAASGVPALVQSKGHVIDGVSEFPLVVSDEVQKVQKTKQAVIFLRRLKIWADIQKVYKSQRFRAGRGTMRDRRRIARRGPLVVYDKDEGLRKAFRNIPGIETINVDKLNLLKLAPGGHVGRFVIWTESAFARLNDLFGTWKKPSTLKKGYNLPQPKMANTDLSRLLKSEEIRKVLRDPRKRVFRSVRRLNPLTNVRQLIKLNPYAEVLKRRAALAAEKRTVAKVLAKAKKQNVELAKSHFANVATKAAANRAKLLAARKKKVAAKKPAAKK.

This sequence belongs to the universal ribosomal protein uL4 family.

The sequence is that of Large ribosomal subunit protein uL4 (RpL4) from Drosophila melanogaster (Fruit fly).